Consider the following 283-residue polypeptide: Pantothenate synthetase (283 aa).

26-33 (MGNLHDGH) is an ATP binding site. The active-site Proton donor is the His-33. Gln-57 provides a ligand contact to (R)-pantoate. Residue Gln-57 participates in beta-alanine binding. Residue 148–151 (GKKD) coordinates ATP. (R)-pantoate is bound at residue Gln-154. ATP is bound by residues Ala-177 and 185–188 (LSSR).

The protein belongs to the pantothenate synthetase family. As to quaternary structure, homodimer.

The protein resides in the cytoplasm. The catalysed reaction is (R)-pantoate + beta-alanine + ATP = (R)-pantothenate + AMP + diphosphate + H(+). Its pathway is cofactor biosynthesis; (R)-pantothenate biosynthesis; (R)-pantothenate from (R)-pantoate and beta-alanine: step 1/1. In terms of biological role, catalyzes the condensation of pantoate with beta-alanine in an ATP-dependent reaction via a pantoyl-adenylate intermediate. The protein is Pantothenate synthetase of Delftia acidovorans (strain DSM 14801 / SPH-1).